Reading from the N-terminus, the 659-residue chain is DNA ligase (659 aa).

NAD(+) contacts are provided by residues Asp31–Asp35, Ser80–Leu81, and Glu109. Lys111 functions as the N6-AMP-lysine intermediate in the catalytic mechanism. Residues Arg132, Glu166, Lys281, and Lys305 each coordinate NAD(+). Zn(2+)-binding residues include Cys398, Cys401, Cys416, and Cys421. Residues Val581–Glu659 enclose the BRCT domain.

The protein belongs to the NAD-dependent DNA ligase family. LigA subfamily. Requires Mg(2+) as cofactor. The cofactor is Mn(2+).

It carries out the reaction NAD(+) + (deoxyribonucleotide)n-3'-hydroxyl + 5'-phospho-(deoxyribonucleotide)m = (deoxyribonucleotide)n+m + AMP + beta-nicotinamide D-nucleotide.. Its function is as follows. DNA ligase that catalyzes the formation of phosphodiester linkages between 5'-phosphoryl and 3'-hydroxyl groups in double-stranded DNA using NAD as a coenzyme and as the energy source for the reaction. It is essential for DNA replication and repair of damaged DNA. The chain is DNA ligase from Acholeplasma laidlawii (strain PG-8A).